The following is a 513-amino-acid chain: Bifunctional purine biosynthesis protein PurH (513 aa).

Residues 1-144 form the MGS-like domain; it reads MKRALVSVSD…KNYRDVTIVV (144 aa).

Belongs to the PurH family.

The enzyme catalyses (6R)-10-formyltetrahydrofolate + 5-amino-1-(5-phospho-beta-D-ribosyl)imidazole-4-carboxamide = 5-formamido-1-(5-phospho-D-ribosyl)imidazole-4-carboxamide + (6S)-5,6,7,8-tetrahydrofolate. It catalyses the reaction IMP + H2O = 5-formamido-1-(5-phospho-D-ribosyl)imidazole-4-carboxamide. It functions in the pathway purine metabolism; IMP biosynthesis via de novo pathway; 5-formamido-1-(5-phospho-D-ribosyl)imidazole-4-carboxamide from 5-amino-1-(5-phospho-D-ribosyl)imidazole-4-carboxamide (10-formyl THF route): step 1/1. It participates in purine metabolism; IMP biosynthesis via de novo pathway; IMP from 5-formamido-1-(5-phospho-D-ribosyl)imidazole-4-carboxamide: step 1/1. The protein is Bifunctional purine biosynthesis protein PurH of Lactobacillus delbrueckii subsp. bulgaricus (strain ATCC BAA-365 / Lb-18).